The chain runs to 355 residues: uncharacterized protein (355 aa).

The signal sequence occupies residues 1 to 22 (MRLTHVTACICLLVAVAVLFSG).

The protein belongs to the bacterial solute-binding protein 1 family. WtpA subfamily.

This is an uncharacterized protein from Methanoculleus marisnigri (strain ATCC 35101 / DSM 1498 / JR1).